Consider the following 404-residue polypeptide: Argininosuccinate synthase (404 aa).

Residues 12-20 (AYSGGLDTS) and alanine 40 contribute to the ATP site. Residues tyrosine 92 and serine 97 each coordinate L-citrulline. Glycine 122 is an ATP binding site. Threonine 124, asparagine 128, and aspartate 129 together coordinate L-aspartate. Asparagine 128 is a binding site for L-citrulline. The L-citrulline site is built by arginine 132, serine 181, serine 190, glutamate 266, and tyrosine 278.

The protein belongs to the argininosuccinate synthase family. Type 1 subfamily. Homotetramer.

It localises to the cytoplasm. The catalysed reaction is L-citrulline + L-aspartate + ATP = 2-(N(omega)-L-arginino)succinate + AMP + diphosphate + H(+). It functions in the pathway amino-acid biosynthesis; L-arginine biosynthesis; L-arginine from L-ornithine and carbamoyl phosphate: step 2/3. The sequence is that of Argininosuccinate synthase from Photorhabdus laumondii subsp. laumondii (strain DSM 15139 / CIP 105565 / TT01) (Photorhabdus luminescens subsp. laumondii).